The chain runs to 256 residues: Acetyl-coenzyme A carboxylase carboxyl transferase subunit alpha (256 aa).

The CoA carboxyltransferase C-terminal domain maps to Met-1–Ser-236.

The protein belongs to the AccA family. Acetyl-CoA carboxylase is a heterohexamer composed of biotin carboxyl carrier protein (AccB), biotin carboxylase (AccC) and two subunits each of ACCase subunit alpha (AccA) and ACCase subunit beta (AccD).

It localises to the cytoplasm. It catalyses the reaction N(6)-carboxybiotinyl-L-lysyl-[protein] + acetyl-CoA = N(6)-biotinyl-L-lysyl-[protein] + malonyl-CoA. It functions in the pathway lipid metabolism; malonyl-CoA biosynthesis; malonyl-CoA from acetyl-CoA: step 1/1. Its function is as follows. Component of the acetyl coenzyme A carboxylase (ACC) complex. First, biotin carboxylase catalyzes the carboxylation of biotin on its carrier protein (BCCP) and then the CO(2) group is transferred by the carboxyltransferase to acetyl-CoA to form malonyl-CoA. The chain is Acetyl-coenzyme A carboxylase carboxyl transferase subunit alpha from Streptococcus pyogenes serotype M12 (strain MGAS2096).